The following is a 346-amino-acid chain: Ribonucleoside-diphosphate reductase subunit beta (346 aa).

The Fe cation site is built by Glu-89, Glu-120, and His-123. The active site involves Tyr-129. Positions 193, 227, and 230 each coordinate Fe cation.

The protein belongs to the ribonucleoside diphosphate reductase small chain family. Tetramer of two alpha and two beta subunits. Requires Fe cation as cofactor.

It carries out the reaction a 2'-deoxyribonucleoside 5'-diphosphate + [thioredoxin]-disulfide + H2O = a ribonucleoside 5'-diphosphate + [thioredoxin]-dithiol. In terms of biological role, provides the precursors necessary for DNA synthesis. Catalyzes the biosynthesis of deoxyribonucleotides from the corresponding ribonucleotides. In Chlamydia trachomatis serovar D (strain ATCC VR-885 / DSM 19411 / UW-3/Cx), this protein is Ribonucleoside-diphosphate reductase subunit beta (nrdB).